We begin with the raw amino-acid sequence, 455 residues long: Phosphoglucosamine mutase (455 aa).

The active-site Phosphoserine intermediate is the Ser-108. Mg(2+)-binding residues include Ser-108, Asp-246, Asp-248, and Asp-250. A Phosphoserine modification is found at Ser-108.

It belongs to the phosphohexose mutase family. Mg(2+) serves as cofactor. In terms of processing, activated by phosphorylation.

It carries out the reaction alpha-D-glucosamine 1-phosphate = D-glucosamine 6-phosphate. Its function is as follows. Catalyzes the conversion of glucosamine-6-phosphate to glucosamine-1-phosphate. The chain is Phosphoglucosamine mutase from Frankia alni (strain DSM 45986 / CECT 9034 / ACN14a).